The primary structure comprises 504 residues: Maturase K (504 aa).

The protein belongs to the intron maturase 2 family. MatK subfamily.

The protein resides in the plastid. The protein localises to the chloroplast. Usually encoded in the trnK tRNA gene intron. Probably assists in splicing its own and other chloroplast group II introns. This chain is Maturase K, found in Arabidopsis thaliana (Mouse-ear cress).